The following is a 626-amino-acid chain: Zinc finger protein 471 (626 aa).

A KRAB domain is found at Val-14–Ser-85. 15 consecutive C2H2-type zinc fingers follow at residues Phe-206 to His-228, Tyr-234 to His-256, Phe-262 to His-284, Tyr-290 to His-312, Tyr-318 to His-340, Tyr-346 to His-369, Phe-375 to His-397, Tyr-403 to His-425, Tyr-431 to His-453, Tyr-459 to His-481, Tyr-487 to His-509, Tyr-515 to His-537, Tyr-543 to His-565, Tyr-571 to His-593, and Tyr-599 to His-621.

This sequence belongs to the krueppel C2H2-type zinc-finger protein family.

It localises to the nucleus. May be involved in transcriptional regulation. This chain is Zinc finger protein 471 (ZNF471), found in Homo sapiens (Human).